The sequence spans 171 residues: 3-hydroxydecanoyl-[acyl-carrier-protein] dehydratase (171 aa).

Residue His71 is part of the active site.

It belongs to the thioester dehydratase family. FabA subfamily. Homodimer.

The protein resides in the cytoplasm. The catalysed reaction is a (3R)-hydroxyacyl-[ACP] = a (2E)-enoyl-[ACP] + H2O. It carries out the reaction (3R)-hydroxydecanoyl-[ACP] = (2E)-decenoyl-[ACP] + H2O. The enzyme catalyses (2E)-decenoyl-[ACP] = (3Z)-decenoyl-[ACP]. Its pathway is lipid metabolism; fatty acid biosynthesis. Its function is as follows. Necessary for the introduction of cis unsaturation into fatty acids. Catalyzes the dehydration of (3R)-3-hydroxydecanoyl-ACP to E-(2)-decenoyl-ACP and then its isomerization to Z-(3)-decenoyl-ACP. Can catalyze the dehydratase reaction for beta-hydroxyacyl-ACPs with saturated chain lengths up to 16:0, being most active on intermediate chain length. The polypeptide is 3-hydroxydecanoyl-[acyl-carrier-protein] dehydratase (Sinorhizobium fredii (strain NBRC 101917 / NGR234)).